The sequence spans 281 residues: 4-hydroxy-3-methylbut-2-enyl diphosphate reductase (281 aa).

Residue C12 participates in [4Fe-4S] cluster binding. (2E)-4-hydroxy-3-methylbut-2-enyl diphosphate-binding residues include H41 and H74. 2 residues coordinate dimethylallyl diphosphate: H41 and H74. Residues H41 and H74 each coordinate isopentenyl diphosphate. C96 contacts [4Fe-4S] cluster. (2E)-4-hydroxy-3-methylbut-2-enyl diphosphate is bound at residue H124. A dimethylallyl diphosphate-binding site is contributed by H124. H124 serves as a coordination point for isopentenyl diphosphate. E126 functions as the Proton donor in the catalytic mechanism. Residue T164 coordinates (2E)-4-hydroxy-3-methylbut-2-enyl diphosphate. Residue C193 participates in [4Fe-4S] cluster binding. S221, N223, and S265 together coordinate (2E)-4-hydroxy-3-methylbut-2-enyl diphosphate. The dimethylallyl diphosphate site is built by S221, N223, and S265. Residues S221, N223, and S265 each contribute to the isopentenyl diphosphate site.

It belongs to the IspH family. [4Fe-4S] cluster serves as cofactor.

It catalyses the reaction isopentenyl diphosphate + 2 oxidized [2Fe-2S]-[ferredoxin] + H2O = (2E)-4-hydroxy-3-methylbut-2-enyl diphosphate + 2 reduced [2Fe-2S]-[ferredoxin] + 2 H(+). The catalysed reaction is dimethylallyl diphosphate + 2 oxidized [2Fe-2S]-[ferredoxin] + H2O = (2E)-4-hydroxy-3-methylbut-2-enyl diphosphate + 2 reduced [2Fe-2S]-[ferredoxin] + 2 H(+). The protein operates within isoprenoid biosynthesis; dimethylallyl diphosphate biosynthesis; dimethylallyl diphosphate from (2E)-4-hydroxy-3-methylbutenyl diphosphate: step 1/1. Its pathway is isoprenoid biosynthesis; isopentenyl diphosphate biosynthesis via DXP pathway; isopentenyl diphosphate from 1-deoxy-D-xylulose 5-phosphate: step 6/6. In terms of biological role, catalyzes the conversion of 1-hydroxy-2-methyl-2-(E)-butenyl 4-diphosphate (HMBPP) into a mixture of isopentenyl diphosphate (IPP) and dimethylallyl diphosphate (DMAPP). Acts in the terminal step of the DOXP/MEP pathway for isoprenoid precursor biosynthesis. The polypeptide is 4-hydroxy-3-methylbut-2-enyl diphosphate reductase (Oleidesulfovibrio alaskensis (strain ATCC BAA-1058 / DSM 17464 / G20) (Desulfovibrio alaskensis)).